Here is a 122-residue protein sequence, read N- to C-terminus: Large ribosomal subunit protein bL12 (122 aa).

The protein belongs to the bacterial ribosomal protein bL12 family. Homodimer. Part of the ribosomal stalk of the 50S ribosomal subunit. Forms a multimeric L10(L12)X complex, where L10 forms an elongated spine to which 2 to 4 L12 dimers bind in a sequential fashion. Binds GTP-bound translation factors.

Functionally, forms part of the ribosomal stalk which helps the ribosome interact with GTP-bound translation factors. Is thus essential for accurate translation. In Myxococcus xanthus (strain DK1622), this protein is Large ribosomal subunit protein bL12.